The following is a 200-amino-acid chain: Holliday junction branch migration complex subunit RuvA (200 aa).

A domain I region spans residues Met-1 to Ala-64. The domain II stretch occupies residues Glu-65–Ala-143. The flexible linker stretch occupies residues Met-144–Ala-154. A domain III region spans residues Ala-154–Gly-200.

Belongs to the RuvA family. In terms of assembly, homotetramer. Forms an RuvA(8)-RuvB(12)-Holliday junction (HJ) complex. HJ DNA is sandwiched between 2 RuvA tetramers; dsDNA enters through RuvA and exits via RuvB. An RuvB hexamer assembles on each DNA strand where it exits the tetramer. Each RuvB hexamer is contacted by two RuvA subunits (via domain III) on 2 adjacent RuvB subunits; this complex drives branch migration. In the full resolvosome a probable DNA-RuvA(4)-RuvB(12)-RuvC(2) complex forms which resolves the HJ.

It localises to the cytoplasm. The RuvA-RuvB-RuvC complex processes Holliday junction (HJ) DNA during genetic recombination and DNA repair, while the RuvA-RuvB complex plays an important role in the rescue of blocked DNA replication forks via replication fork reversal (RFR). RuvA specifically binds to HJ cruciform DNA, conferring on it an open structure. The RuvB hexamer acts as an ATP-dependent pump, pulling dsDNA into and through the RuvAB complex. HJ branch migration allows RuvC to scan DNA until it finds its consensus sequence, where it cleaves and resolves the cruciform DNA. This is Holliday junction branch migration complex subunit RuvA from Erythrobacter litoralis (strain HTCC2594).